We begin with the raw amino-acid sequence, 1240 residues long: DNA polymerase catalytic subunit (1240 aa).

Residues 1–26 are compositionally biased toward low complexity; the sequence is MFCAAGGPASPGGKSAARAASGFFAP. Disordered stretches follow at residues 1 to 65, 646 to 695, and 1103 to 1139; these read MFCA…PAQR, GLDK…RETG, and AAAP…ASKP. A compositionally biased stretch (polar residues) spans 44-56; it reads NFYNPHLAQTGTQ. Over residues 669–688 the composition is skewed to acidic residues; sequence NGDEDKDDDEDGDEDGDERE.

The protein belongs to the DNA polymerase type-B family. Forms a complex with the ssDNA-binding protein UL29, the DNA polymerase processivity factor, and the alkaline exonuclease. Interacts with the putative helicase-primase complex subunit UL8; this interaction may coordinate leading and lagging strand DNA synthesis at the replication fork.

The protein localises to the host nucleus. It catalyses the reaction DNA(n) + a 2'-deoxyribonucleoside 5'-triphosphate = DNA(n+1) + diphosphate. It carries out the reaction Endonucleolytic cleavage to 5'-phosphomonoester.. In terms of biological role, replicates viral genomic DNA. The replication complex is composed of six viral proteins: the DNA polymerase, processivity factor, primase, primase-associated factor, helicase, and ssDNA-binding protein. Additionally, the polymerase contains an intrinsic ribonuclease H (RNase H) activity that specifically degrades RNA/DNA heteroduplexes or duplex DNA substrates in the 5' to 3' direction. Therefore, it can catalyze the excision of the RNA primers that initiate the synthesis of Okazaki fragments at a replication fork during viral DNA replication. This is DNA polymerase catalytic subunit from Human herpesvirus 2 (strain 186) (HHV-2).